Consider the following 733-residue polypeptide: Alpha,alpha-trehalose-phosphate synthase [UDP-forming] A (733 aa).

The protein in the N-terminal section; belongs to the glycosyltransferase 20 family. This sequence in the C-terminal section; belongs to the trehalose phosphatase family.

It carries out the reaction D-glucose 6-phosphate + UDP-alpha-D-glucose = alpha,alpha-trehalose 6-phosphate + UDP + H(+). Its function is as follows. Synthesizes trehalose 6-phosphate, the precursor for the production of trehalose, the main carbohydrate storage reserve of the dormant spore. Trehalose accumulates in both prestalk and prespore cells and then is rapidly metabolized during terminal differentiation of stalk cells, while being stored in spores, where it serves as the principal energy and carbon source for germination. The sequence is that of Alpha,alpha-trehalose-phosphate synthase [UDP-forming] A (tpsA) from Dictyostelium discoideum (Social amoeba).